A 121-amino-acid chain; its full sequence is Phosphoribosyl-ATP pyrophosphatase (121 aa).

Belongs to the PRA-PH family.

The protein resides in the cytoplasm. It catalyses the reaction 1-(5-phospho-beta-D-ribosyl)-ATP + H2O = 1-(5-phospho-beta-D-ribosyl)-5'-AMP + diphosphate + H(+). Its pathway is amino-acid biosynthesis; L-histidine biosynthesis; L-histidine from 5-phospho-alpha-D-ribose 1-diphosphate: step 2/9. The protein is Phosphoribosyl-ATP pyrophosphatase of Burkholderia ambifaria (strain MC40-6).